Consider the following 60-residue polypeptide: Large ribosomal subunit protein bL32 (60 aa).

The segment at 1-23 (MAVPKRKKSKSRRNMHRSHHAIK) is disordered.

It belongs to the bacterial ribosomal protein bL32 family.

The chain is Large ribosomal subunit protein bL32 from Wolbachia sp. subsp. Brugia malayi (strain TRS).